We begin with the raw amino-acid sequence, 110 residues long: UPF0102 protein Abu_0255 (110 aa).

The protein belongs to the UPF0102 family.

In Aliarcobacter butzleri (strain RM4018) (Arcobacter butzleri), this protein is UPF0102 protein Abu_0255.